The primary structure comprises 105 residues: Phosphoribosyl-ATP pyrophosphatase (105 aa).

It belongs to the PRA-PH family.

The protein localises to the cytoplasm. It catalyses the reaction 1-(5-phospho-beta-D-ribosyl)-ATP + H2O = 1-(5-phospho-beta-D-ribosyl)-5'-AMP + diphosphate + H(+). The protein operates within amino-acid biosynthesis; L-histidine biosynthesis; L-histidine from 5-phospho-alpha-D-ribose 1-diphosphate: step 2/9. The chain is Phosphoribosyl-ATP pyrophosphatase from Methylococcus capsulatus (strain ATCC 33009 / NCIMB 11132 / Bath).